Here is a 380-residue protein sequence, read N- to C-terminus: Chaperone protein DnaJ (380 aa).

In terms of domain architecture, J spans 4-69; it reads DYYEILGVTR…QKRAAYDRFG (66 aa). The CR-type zinc finger occupies 135-213; that stretch reads GKTAQINIPS…CQGTRRVEKN (79 aa). The Zn(2+) site is built by Cys148, Cys151, Cys165, Cys168, Cys187, Cys190, Cys201, and Cys204. 4 CXXCXGXG motif repeats span residues 148-155, 165-172, 187-194, and 201-208; these read CDSCEGSG, CGTCHGAG, CHACNGRG, and CPKCQGTR.

It belongs to the DnaJ family. Homodimer. It depends on Zn(2+) as a cofactor.

The protein localises to the cytoplasm. In terms of biological role, participates actively in the response to hyperosmotic and heat shock by preventing the aggregation of stress-denatured proteins and by disaggregating proteins, also in an autonomous, DnaK-independent fashion. Unfolded proteins bind initially to DnaJ; upon interaction with the DnaJ-bound protein, DnaK hydrolyzes its bound ATP, resulting in the formation of a stable complex. GrpE releases ADP from DnaK; ATP binding to DnaK triggers the release of the substrate protein, thus completing the reaction cycle. Several rounds of ATP-dependent interactions between DnaJ, DnaK and GrpE are required for fully efficient folding. Also involved, together with DnaK and GrpE, in the DNA replication of plasmids through activation of initiation proteins. The polypeptide is Chaperone protein DnaJ (Bartonella quintana (strain Toulouse) (Rochalimaea quintana)).